A 218-amino-acid polypeptide reads, in one-letter code: Elongation factor Ts (218 aa).

The interval 82-85 (TDFV) is involved in Mg(2+) ion dislocation from EF-Tu.

This sequence belongs to the EF-Ts family.

Its subcellular location is the cytoplasm. Its function is as follows. Associates with the EF-Tu.GDP complex and induces the exchange of GDP to GTP. It remains bound to the aminoacyl-tRNA.EF-Tu.GTP complex up to the GTP hydrolysis stage on the ribosome. This is Elongation factor Ts from Picosynechococcus sp. (strain ATCC 27264 / PCC 7002 / PR-6) (Agmenellum quadruplicatum).